The sequence spans 49 residues: Small ribosomal subunit protein eS31 (49 aa).

Zn(2+)-binding residues include Cys-21, Cys-24, Cys-39, and Cys-42. The C4-type zinc finger occupies 21–42 (CPRCGPGTFLADHKNRLTCGKC).

This sequence belongs to the eukaryotic ribosomal protein eS31 family. As to quaternary structure, part of the 30S ribosomal subunit. The cofactor is Zn(2+).

The sequence is that of Small ribosomal subunit protein eS31 from Methanosarcina barkeri (strain Fusaro / DSM 804).